Reading from the N-terminus, the 264-residue chain is Phosphonoacetaldehyde hydrolase (264 aa).

D9 acts as the Nucleophile in catalysis. Mg(2+) is bound by residues D9 and A11. K50 acts as the Schiff-base intermediate with substrate in catalysis. D183 contributes to the Mg(2+) binding site.

This sequence belongs to the HAD-like hydrolase superfamily. PhnX family. As to quaternary structure, homodimer. Mg(2+) serves as cofactor.

The catalysed reaction is phosphonoacetaldehyde + H2O = acetaldehyde + phosphate + H(+). Involved in phosphonate degradation. In Bacillus cereus (strain G9842), this protein is Phosphonoacetaldehyde hydrolase.